The primary structure comprises 202 residues: CASP-like protein 2U7 (202 aa).

Residues 1 to 10 (MLELYEKRRA) lie on the Cytoplasmic side of the membrane. Residues 11–31 (LLLLRLAAMFLSLAALLITVL) traverse the membrane as a helical segment. Over 32-64 (NREDGFFSINVFGSPQPILTKATADFTLVKGLK) the chain is Extracellular. Residues 65-85 (FFAGAMGIVAGYSFLQLAIAM) traverse the membrane as a helical segment. Residues 86–101 (ASMFSGAPSILGGKRM) lie on the Cytoplasmic side of the membrane. Residues 102–122 (AWLCFVGDMTASHLCAAAAAV) traverse the membrane as a helical segment. Over 123 to 148 (SAQLAYLGKRGAPMWSAVCTYFSHYC) the chain is Extracellular. A helical membrane pass occupies residues 149–169 (LVFGLAVIFAFLATLAALLVA). Residues 170–202 (SISSYHLFRLHGILQQQQQQRRQLQQEHVQDKP) lie on the Cytoplasmic side of the membrane.

The protein belongs to the Casparian strip membrane proteins (CASP) family. In terms of assembly, homodimer and heterodimers.

The protein localises to the cell membrane. The sequence is that of CASP-like protein 2U7 from Selaginella moellendorffii (Spikemoss).